Consider the following 335-residue polypeptide: Mesoderm-specific transcript protein (335 aa).

The next 2 helical transmembrane spans lie at 13–33 and 63–83; these read WWVQ…HIPP and VGVV…TSSY. An AB hydrolase-1 domain is found at 71 to 310; it reads IVVLLHGFPT…PRSTVSILDD (240 aa). Positions 98-103 match the RVIALD motif; that stretch reads RVIALD. The N-linked (GlcNAc...) asparagine glycan is linked to N163. The helical transmembrane segment at 266–286 threads the bilayer; that stretch reads VGALASVSIPIHFIYGPLDPI.

Belongs to the AB hydrolase superfamily. As to expression, expressed in mesodermal tissues. Isoform 1 is exclusively expressed from the paternal allele in all fetal tissues and cell lines examined, whereas isoform 2 is preferentially expressed from the paternal allele in a tissue-type-specific manner.

The protein localises to the endoplasmic reticulum membrane. The protein is Mesoderm-specific transcript protein (Mest) of Mus musculus (Mouse).